A 259-amino-acid chain; its full sequence is Thiazole synthase (259 aa).

K98 functions as the Schiff-base intermediate with DXP in the catalytic mechanism. 1-deoxy-D-xylulose 5-phosphate-binding positions include G159, A185–G186, and N207–S208.

Belongs to the ThiG family. In terms of assembly, homotetramer. Forms heterodimers with either ThiH or ThiS.

It localises to the cytoplasm. It catalyses the reaction [ThiS sulfur-carrier protein]-C-terminal-Gly-aminoethanethioate + 2-iminoacetate + 1-deoxy-D-xylulose 5-phosphate = [ThiS sulfur-carrier protein]-C-terminal Gly-Gly + 2-[(2R,5Z)-2-carboxy-4-methylthiazol-5(2H)-ylidene]ethyl phosphate + 2 H2O + H(+). The protein operates within cofactor biosynthesis; thiamine diphosphate biosynthesis. In terms of biological role, catalyzes the rearrangement of 1-deoxy-D-xylulose 5-phosphate (DXP) to produce the thiazole phosphate moiety of thiamine. Sulfur is provided by the thiocarboxylate moiety of the carrier protein ThiS. In vitro, sulfur can be provided by H(2)S. The chain is Thiazole synthase from Chlorobium limicola (strain DSM 245 / NBRC 103803 / 6330).